The primary structure comprises 97 residues: Large ribosomal subunit protein bL28 (97 aa).

The protein belongs to the bacterial ribosomal protein bL28 family.

This chain is Large ribosomal subunit protein bL28, found in Rickettsia rickettsii (strain Iowa).